Consider the following 243-residue polypeptide: MELSYFHVAKDVPSGIKPETSVVIDVLRATTTIACALNNGAEAVQTFADLDNLKEQASCWPLSKRLLLGERGGKKIDGFDLGNSPLAVTSNVVKGKRLFMSTTNGTRSLERVKESKSLYTMSFINRKAVAEKLISNQSKSVLILGSGWEGAYSLEDSLAAGALASFLLNKNPNSVHILNDELSAAVALWSCWENNIEGCLRNATHGKRLERLGNHDDDFTCCSELDKICVVPTQREKGVLCSL.

Belongs to the ComB family. Requires Mg(2+) as cofactor.

It carries out the reaction (2R)-O-phospho-3-sulfolactate + H2O = (2R)-3-sulfolactate + phosphate. This is Probable 2-phosphosulfolactate phosphatase from Prochlorococcus marinus (strain SARG / CCMP1375 / SS120).